Consider the following 353-residue polypeptide: Protein disulfide isomerase CRELD2 (353 aa).

Residues 1 to 24 (MRLPRRAALGLLPLLLLLPPAPEA) form the signal peptide. A CXXC motif is present at residues 31–34 (CHRC). 4 cysteine pairs are disulfide-bonded: cysteine 31–cysteine 34, cysteine 140–cysteine 154, cysteine 148–cysteine 166, and cysteine 168–cysteine 177. The 43-residue stretch at 136 to 178 (DCLACQGGSQRPCSGNGHCSGDGSRQGDGSCRCHMGYQGPLCT) folds into the EGF-like 1 domain. An FU 1 repeat occupies 193–240 (HSICTACDESCKTCSGLTNRDCGECEVGWVLDEGACVDVDECAAEPPP). N-linked (GlcNAc...) asparagine glycosylation occurs at asparagine 251. Residues 253–302 (SYTCEECDSSCVGCTGEGPGNCKECISGYAREHGQCADVDECSLAEKTCV) form an FU 2 repeat. The short motif at 263–266 (CVGC) is the CXXC element. Disulfide bonds link cysteine 263/cysteine 266, cysteine 294/cysteine 308, cysteine 301/cysteine 317, and cysteine 319/cysteine 330. Residues 290-331 (DVDECSLAEKTCVRKNENCYNTPGSYVCVCPDGFEETEDACV) enclose the EGF-like 2; calcium-binding domain. The interval 332–353 (PPAEAEATEGESPTQLPSREDL) is disordered. The segment covering 342-353 (ESPTQLPSREDL) has biased composition (polar residues).

This sequence belongs to the CRELD family. In terms of assembly, interacts with CHRNA4. Component of a complex containing at least CRELD2, MANF, MATN3 and PDIA4. As to expression, ubiquitously expressed. Highly expressed in skeletal muscle, heart, liver, kidney and placenta.

The protein resides in the endoplasmic reticulum. It catalyses the reaction Catalyzes the rearrangement of -S-S- bonds in proteins.. Functionally, protein disulfide isomerase. Might play a role in the unfolded protein response. May regulate transport of alpha4-beta2 neuronal acetylcholine receptor. This chain is Protein disulfide isomerase CRELD2 (CRELD2), found in Homo sapiens (Human).